Consider the following 3241-residue polypeptide: PHD finger protein rhinoceros (3241 aa).

Positions 1 to 16 are enriched in basic residues; that stretch reads MSQRGKRGNQQHHQSH. Residues 1–126 form a disordered region; the sequence is MSQRGKRGNQ…GASSSSSWQA (126 aa). 2 stretches are compositionally biased toward low complexity: residues 42–55 and 90–126; these read PPNGATTAAVAEVT and RAAAGATSTSKSKSTKLAKSASKCKSQGASSSSSWQA. A PHD-type 1 zinc finger spans residues 312 to 362; the sequence is NVICDVCRSPDSEEANEMVFCDNCNICVHQACYGITAIPSGQWLCRTCSMG. A C2HC pre-PHD-type zinc finger spans residues 364–398; the sequence is KPDCVLCPNKGGAMKSNKSGKHWAHVSCALWIPEV. The PHD-type 2 zinc finger occupies 422 to 481; sequence LICVLCRKRVGSCIQCSVKPCKTAYHVTCAFQHGLEMRAIIEEGNAEDGVKLRSYCQKHS. Disordered regions lie at residues 482–501, 508–554, 737–1266, 1279–1483, 1500–1613, and 1632–1746; these read MSKGKKENAGSHGGGSASVA, NRYG…ARAQ, SGKQ…VATP, PQRQ…STKV, PKTN…SETR, and NLGA…QHLL. Residues 540–554 are compositionally biased toward basic and acidic residues; that stretch reads KTELTSEERNQARAQ. Positions 762–777 are enriched in polar residues; sequence KKLNNGILSSRTSSPE. Low complexity predominate over residues 807–874; the sequence is KSSAAAATST…SGSSSAGSGV (68 aa). Residues 931 to 943 show a composition bias toward basic and acidic residues; it reads ERCRNRQEPERGA. The span at 949–965 shows a compositional bias: polar residues; it reads QSKSVPNRSQASRSKPT. The span at 995–1007 shows a compositional bias: acidic residues; the sequence is DADESVSSDESEE. Residues 1019-1031 show a composition bias toward low complexity; it reads STTTSGLATTGSA. Positions 1060-1075 are enriched in polar residues; sequence TVESNVSDSQNQQTIR. Residues 1087 to 1104 are compositionally biased toward low complexity; the sequence is TAATTSSTSQAASSTSKA. 2 stretches are compositionally biased toward polar residues: residues 1117-1126 and 1151-1163; these read IGNSTKTKPN and NMRSTNLATTLQP. Residues 1184–1211 are compositionally biased toward basic and acidic residues; that stretch reads KVKDSSSRVSNEADKSSLEKVRPKEHLQ. Over residues 1313-1327 the composition is skewed to polar residues; sequence VTSATISGSGSSVPA. At T1346 the chain carries Phosphothreonine. The residue at position 1352 (S1352) is a Phosphoserine. T1364 is subject to Phosphothreonine. Residues 1382 to 1426 are compositionally biased toward low complexity; the sequence is SSSSSGDSESSSSSSSSGSSSSSGGSDSDSESQASNSENPSSREP. At T1456 the chain carries Phosphothreonine. Residues 1463-1483 are compositionally biased toward polar residues; the sequence is NVLNIPSTRSRQNSTTKSTKV. A compositionally biased stretch (basic and acidic residues) spans 1541-1558; the sequence is SPEKTVSRCKSRAEESPK. Polar residues predominate over residues 1576-1594; that stretch reads KGTSSLDKLLNKKQQQMNH. Positions 1599–1608 are enriched in pro residues; it reads TPPPISPTPP. Positions 1664 to 1675 are enriched in polar residues; that stretch reads TAPTRTQLSASA. Residues 1688 to 1699 are compositionally biased toward pro residues; that stretch reads PAAPLPASPTPT. Residues 1717–1731 are compositionally biased toward basic residues; it reads RRMRWRSRRRRRRRS. 2 coiled-coil regions span residues 1741 to 1770 and 1893 to 1925; these read HTQHLLNEMEMARELEEERKNELLANASKY and SEEDSIQATRNLLEKLRKTKRKAQDDCSSKEAV. Disordered stretches follow at residues 2037-2061, 2124-2148, 2203-2227, 2346-2454, 2598-2629, 2667-2691, 2768-2811, 2832-2911, 2964-3015, 3042-3169, and 3184-3241; these read LEKSPHQKGACPLSSNGGANVGQPA, AERRSSSPSSVSESNDPPQPPPVVT, NNTNTTQHQPTTPAHQQQQQRTPNN, TPPV…GGVT, ATGTGTSPSKQHSGPTALVAPPTGPNPTPAPN, SEEVSIDSDSTIPHSKTSTSDARSQ, NDDS…NSSS, GAGA…SVDE, NKRG…TTTM, KAET…EAAM, and VNVG…CEVR. The span at 2359 to 2381 shows a compositional bias: polar residues; it reads KRTSVSGSNLSKKQTHKSPQLPQ. The span at 2392 to 2402 shows a compositional bias: pro residues; sequence PLQPPTPPAPV. Over residues 2430 to 2439 the composition is skewed to gly residues; that stretch reads GSGGSGAPGR. Composition is skewed to polar residues over residues 2598–2611 and 2673–2689; these read ATGTGTSPSKQHSG and DSDSTIPHSKTSTSDAR. Over residues 2855-2865 the composition is skewed to polar residues; that stretch reads NNDNNGKTGAA. Residues 2876 to 2887 are compositionally biased toward basic and acidic residues; sequence KTLESSEDDHQA. Phosphoserine is present on residues S2880 and S2881. The segment covering 2899–2911 has biased composition (polar residues); sequence ANETPSGVSSVDE. Positions 2964–2974 are enriched in basic and acidic residues; that stretch reads NKRGVVVKDGE. Residues 2984–3002 are compositionally biased toward basic residues; it reads KRPKSSKPKKEKKEKKRQK. Over residues 3003-3015 the composition is skewed to low complexity; that stretch reads QQQLILSSSTTTM. Phosphoserine occurs at positions 3104 and 3110. Polar residues-rich tracts occupy residues 3115 to 3130 and 3184 to 3197; these read LLNSFTPHSQNANTSP and VNVGNYENSNNSLP. Over residues 3198–3218 the composition is skewed to low complexity; that stretch reads SASGTGSASSNSCNSNSINNN. Residues 3219–3230 show a composition bias toward gly residues; the sequence is GSGGGRASGEGG.

Belongs to the JADE family.

The protein localises to the nucleus. Its function is as follows. May function as a negative regulator of the EGFR/Ras/MAPK signaling pathway during eye development. The sequence is that of PHD finger protein rhinoceros (rno) from Drosophila melanogaster (Fruit fly).